We begin with the raw amino-acid sequence, 516 residues long: GMP synthase [glutamine-hydrolyzing] (516 aa).

A Glutamine amidotransferase type-1 domain is found at 8–198; that stretch reads KILILDFGSQ…ALNICKCDAL (191 aa). C84 functions as the Nucleophile in the catalytic mechanism. Active-site residues include H172 and E174. Residues 199–391 form the GMPS ATP-PPase domain; that stretch reads WNIENIIEND…LGLPYNMLYR (193 aa). 226–232 serves as a coordination point for ATP; that stretch reads SGGVDSS.

In terms of assembly, homodimer.

It carries out the reaction XMP + L-glutamine + ATP + H2O = GMP + L-glutamate + AMP + diphosphate + 2 H(+). It participates in purine metabolism; GMP biosynthesis; GMP from XMP (L-Gln route): step 1/1. Its function is as follows. Catalyzes the synthesis of GMP from XMP. The polypeptide is GMP synthase [glutamine-hydrolyzing] (Francisella philomiragia subsp. philomiragia (strain ATCC 25017 / CCUG 19701 / FSC 153 / O#319-036)).